The sequence spans 434 residues: MDLSSQRQSPNGSRGFRLQAPLVDSVSCYCRVDSGLKTVVEARKFVPGSKLCIQPDINPNAHRRKNSKRERTRIQPPLLPGLPDDLAVACLIRVPRAEHRKLRLVCKRWYRLASGNFFYSQRKLLGMSEEWVYVFKRDRDGKISWNTFDPISQLWQPLPPVPREYSEAVGFGCAVLSGCHLYLFGGKDPLRGSMRRVIFYNARTNKWHRAPDMLRKRHFFGCCVINNCLYVAGGECEGIQRTLRSAEVYDPNKNRWSFIADMSTAMVPLIGVVYDKKWFLKGLGSHQLVMSEAYDPEVNSWSPVSDGMVAGWRNPCTSLNGRLYGLDCRDGCKLRVFDESTDSWNKFMDSKAHLGNSKSLEAAALVPLHNKLCIIRNNMSMSLVDVSNPDKNNPRLWENIAVKGQSKSILSNIWSSIAGRALKSHIVHCQVLQA.

In terms of domain architecture, F-box spans 76–122 (PPLLPGLPDDLAVACLIRVPRAEHRKLRLVCKRWYRLASGNFFYSQR). Kelch repeat units follow at residues 129–178 (EEWV…VLSG), 180–227 (HLYL…VINN), 229–276 (LYVA…VYDK), 278–321 (WFLK…SLNG), and 325–371 (GLDC…LHNK).

The polypeptide is F-box/kelch-repeat protein At1g55270 (Arabidopsis thaliana (Mouse-ear cress)).